A 1574-amino-acid chain; its full sequence is Sterol 3-beta-glucosyltransferase (1574 aa).

A compositionally biased stretch (polar residues) spans T37–N48. Disordered stretches follow at residues T37–E61 and A102–L170. 2 stretches are compositionally biased toward basic and acidic residues: residues E107–R121 and P128–Y138. The segment covering D139–I148 has biased composition (acidic residues). Residues E149–L170 are compositionally biased toward basic and acidic residues. Residues D253 to T288 form the GRAM 1 domain. One can recognise a PH domain in the interval D323–F471. Disordered regions lie at residues G389–E413, R538–P559, A651–G722, and D774–N806. Residues I692–K701 are compositionally biased toward polar residues. The span at S702–P711 shows a compositional bias: basic and acidic residues. The segment covering D712–G722 has biased composition (polar residues). A GRAM 2 domain is found at R854–K920. Residues R964–S976 are compositionally biased toward basic and acidic residues. The tract at residues R964–K996 is disordered. Residues F985–K996 show a composition bias toward polar residues. Residues S1057, R1058, D1060, N1333, I1364, H1366, H1379, S1382, G1383, T1384, D1403, and Q1404 each contribute to the UDP-alpha-D-glucose site. The segment at D1505 to K1574 is disordered. A compositionally biased stretch (basic and acidic residues) spans D1510–Y1533. Residues G1563–K1574 show a composition bias toward polar residues.

This sequence belongs to the glycosyltransferase 28 family.

The protein resides in the cytoplasm. It is found in the membrane. It catalyses the reaction a sterol + UDP-alpha-D-glucose = a sterol 3-beta-D-glucoside + UDP + H(+). The catalysed reaction is ergosterol + UDP-alpha-D-glucose = ergosteryl 3-beta-D-glucoside + UDP + H(+). Its function is as follows. Sterol glycosyltransferase responsible for the glycosylation of ergosterol to form ergosterol-glucoside. This is Sterol 3-beta-glucosyltransferase from Debaryomyces hansenii (strain ATCC 36239 / CBS 767 / BCRC 21394 / JCM 1990 / NBRC 0083 / IGC 2968) (Yeast).